The primary structure comprises 201 residues: Large ribosomal subunit protein uL4 (201 aa).

The disordered stretch occupies residues 45–73; that stretch reads AQKTRAEVTGSGKKPWRQKGTGRARAGSV.

Belongs to the universal ribosomal protein uL4 family. Part of the 50S ribosomal subunit.

One of the primary rRNA binding proteins, this protein initially binds near the 5'-end of the 23S rRNA. It is important during the early stages of 50S assembly. It makes multiple contacts with different domains of the 23S rRNA in the assembled 50S subunit and ribosome. Functionally, forms part of the polypeptide exit tunnel. This chain is Large ribosomal subunit protein uL4, found in Yersinia pseudotuberculosis serotype O:1b (strain IP 31758).